The primary structure comprises 114 residues: Large ribosomal subunit protein bL20 (114 aa).

The protein belongs to the bacterial ribosomal protein bL20 family.

In terms of biological role, binds directly to 23S ribosomal RNA and is necessary for the in vitro assembly process of the 50S ribosomal subunit. It is not involved in the protein synthesizing functions of that subunit. In Anaeromyxobacter dehalogenans (strain 2CP-1 / ATCC BAA-258), this protein is Large ribosomal subunit protein bL20.